We begin with the raw amino-acid sequence, 248 residues long: Homeobox protein BarH-like 1 (248 aa).

Positions 135-194 form a DNA-binding region, homeobox; the sequence is GRRSRTVFTELQLMGLEKRFEKQKYLSTPDRIDLAESLGLSQLQVKTWYQNRRMKWKKIV. Residues 197–248 form a disordered region; that stretch reads GGGLESPTKPKGRPKKNSIPTSEQLSEQERTREADRLSDGGASSLSDANQEE. A compositionally biased stretch (basic and acidic residues) spans 223 to 234; sequence EQERTREADRLS. A compositionally biased stretch (polar residues) spans 237–248; it reads GASSLSDANQEE.

This sequence belongs to the BAR homeobox family.

The protein resides in the nucleus. In terms of biological role, transcription factor, is involved in craniofacial development, and in stomach organogenesis. The polypeptide is Homeobox protein BarH-like 1 (barx1) (Danio rerio (Zebrafish)).